A 319-amino-acid chain; its full sequence is Transcription factor STKL2 (319 aa).

Residues 1–119 (MAPLESPATA…NKKANPQRVW (119 aa)) form a disordered region. Residues 21–34 (EIFKSSSEESKPKD) show a composition bias toward basic and acidic residues. Residues 38–55 (VPSSKTLKSPSAAVNSKT) show a composition bias toward polar residues. The span at 89 to 112 (RAGEGSTSRDMHVKRVKKEDDNKK) shows a compositional bias: basic and acidic residues.

This sequence belongs to the GeBP family. Expressed strongly in leaves and flowers, weakly in roots, and very weakly in stems.

The protein localises to the nucleus. Functionally, transcription repressor that binds DNA in a sequence-specific manner, 5'-GCCT-3', to regulate the expression of PGR. Acts as a modulatory component for the glucose-triggered developmental leaf growth process. The chain is Transcription factor STKL2 from Arabidopsis thaliana (Mouse-ear cress).